The following is a 130-amino-acid chain: Large ribosomal subunit protein eL32 (130 aa).

Ser-40 carries the phosphoserine modification.

This sequence belongs to the eukaryotic ribosomal protein eL32 family. In terms of assembly, component of the large ribosomal subunit (LSU). Mature yeast ribosomes consist of a small (40S) and a large (60S) subunit. The 40S small subunit contains 1 molecule of ribosomal RNA (18S rRNA) and 33 different proteins (encoded by 57 genes). The large 60S subunit contains 3 rRNA molecules (25S, 5.8S and 5S rRNA) and 46 different proteins (encoded by 81 genes).

It is found in the cytoplasm. Its function is as follows. Component of the ribosome, a large ribonucleoprotein complex responsible for the synthesis of proteins in the cell. The small ribosomal subunit (SSU) binds messenger RNAs (mRNAs) and translates the encoded message by selecting cognate aminoacyl-transfer RNA (tRNA) molecules. The large subunit (LSU) contains the ribosomal catalytic site termed the peptidyl transferase center (PTC), which catalyzes the formation of peptide bonds, thereby polymerizing the amino acids delivered by tRNAs into a polypeptide chain. The nascent polypeptides leave the ribosome through a tunnel in the LSU and interact with protein factors that function in enzymatic processing, targeting, and the membrane insertion of nascent chains at the exit of the ribosomal tunnel. The sequence is that of Large ribosomal subunit protein eL32 from Saccharomyces cerevisiae (strain ATCC 204508 / S288c) (Baker's yeast).